Here is an 822-residue protein sequence, read N- to C-terminus: Serine/threonine-protein phosphatase 4 regulatory subunit 3 (822 aa).

Residues 1–100 form the WH1 domain; that stretch reads MTDTRRRVKV…DEIWEKICQV (100 aa). Positions 744–822 are disordered; the sequence is TSQLSASGHP…PLTKKARLGS (79 aa). Residues 761–774 are compositionally biased toward low complexity; sequence SPGSPESPGSVSKS. Residues 793–808 are compositionally biased toward acidic residues; it reads YPDDDEEDDDNDEEEK.

It belongs to the SMEK family. In terms of assembly, serine/threonine-protein phosphatase 4 (PP4) occurs in different assemblies of the catalytic and one or more regulatory subunits.

Its function is as follows. Regulatory subunit of serine/threonine-protein phosphatase 4. This Xenopus laevis (African clawed frog) protein is Serine/threonine-protein phosphatase 4 regulatory subunit 3 (smek1).